A 203-amino-acid chain; its full sequence is MNAEELAIDPVAAAHRLLGATIAGRGVRAMVVEVEAYGGVPDGPWPDAAAHSYRGRNGRNDVMFGPPGRLYTYRSHGIHVCANVACGPDGTAAAVLLRAAAIEDGAELATSRRGQTVRAVALARGPGNLCAALGITMADNGIDLFDPSSPVRLRLNDTHRARSGPRVGVSQAADRPWRLWLTGRPEVSAYRRSSRAPARGASD.

This sequence belongs to the DNA glycosylase MPG family.

In Mycobacterium tuberculosis (strain ATCC 25177 / H37Ra), this protein is Putative 3-methyladenine DNA glycosylase.